The primary structure comprises 269 residues: MGSFSPLMTYRYHLYSGTGNSFILGEFIPPLQHIVFLCQKEKVDGFLCVEPSEIADAKLTIFNSDGSEASMCGNGLRCVMAHVAQSLGLEDVSIETVRGVYQGKFFSMDRVLVDMTLLDWKKTKKTLTHVLPGMPEEVFFIDTGVPHVVVFVPDVNKVPVQEWGAFLRYHEDFRPNGVNVDFVQTKKEDTLLVYTYERGCERETLSCGTGMLASALVAADVFSLEQDFSLLVCSRSGNIVKIFSENGKVFLEGPVTLLNCSENIGEFAP.

Substrate contacts are provided by asparagine 20 and asparagine 63. Catalysis depends on cysteine 72, which acts as the Proton donor. Substrate contacts are provided by residues 73-74 (GN), asparagine 179, and 197-198 (ER). The active-site Proton acceptor is cysteine 207. Residue 208-209 (GT) participates in substrate binding.

The protein belongs to the diaminopimelate epimerase family. In terms of assembly, homodimer.

The protein localises to the cytoplasm. It catalyses the reaction (2S,6S)-2,6-diaminopimelate = meso-2,6-diaminopimelate. It participates in amino-acid biosynthesis; L-lysine biosynthesis via DAP pathway; DL-2,6-diaminopimelate from LL-2,6-diaminopimelate: step 1/1. Its function is as follows. Catalyzes the stereoinversion of LL-2,6-diaminopimelate (L,L-DAP) to meso-diaminopimelate (meso-DAP), a precursor of L-lysine and an essential component of the bacterial peptidoglycan. This Chlamydia muridarum (strain MoPn / Nigg) protein is Diaminopimelate epimerase.